Reading from the N-terminus, the 362-residue chain is Phospho-2-dehydro-3-deoxyheptonate aldolase (362 aa).

The protein belongs to the class-I DAHP synthase family.

The enzyme catalyses D-erythrose 4-phosphate + phosphoenolpyruvate + H2O = 7-phospho-2-dehydro-3-deoxy-D-arabino-heptonate + phosphate. The protein operates within metabolic intermediate biosynthesis; chorismate biosynthesis; chorismate from D-erythrose 4-phosphate and phosphoenolpyruvate: step 1/7. In terms of biological role, stereospecific condensation of phosphoenolpyruvate (PEP) and D-erythrose-4-phosphate (E4P) giving rise to 3-deoxy-D-arabino-heptulosonate-7-phosphate (DAHP). This chain is Phospho-2-dehydro-3-deoxyheptonate aldolase (aroG), found in Haemophilus influenzae (strain ATCC 51907 / DSM 11121 / KW20 / Rd).